A 635-amino-acid polypeptide reads, in one-letter code: Threonine--tRNA ligase (635 aa).

The TGS domain maps to 1 to 61; it reads MVSIRLPDGS…DHDVALAIVT (61 aa). The tract at residues 242 to 533 is catalytic; it reads DHRKLGKQLD…LIEHHAGAMP (292 aa). Positions 333, 384, and 510 each coordinate Zn(2+).

Belongs to the class-II aminoacyl-tRNA synthetase family. In terms of assembly, homodimer. Zn(2+) serves as cofactor.

Its subcellular location is the cytoplasm. It catalyses the reaction tRNA(Thr) + L-threonine + ATP = L-threonyl-tRNA(Thr) + AMP + diphosphate + H(+). In terms of biological role, catalyzes the attachment of threonine to tRNA(Thr) in a two-step reaction: L-threonine is first activated by ATP to form Thr-AMP and then transferred to the acceptor end of tRNA(Thr). Also edits incorrectly charged L-seryl-tRNA(Thr). The polypeptide is Threonine--tRNA ligase (Paraburkholderia phymatum (strain DSM 17167 / CIP 108236 / LMG 21445 / STM815) (Burkholderia phymatum)).